The following is a 651-amino-acid chain: Kinesin-like protein KIF22-A (651 aa).

A Kinesin motor domain is found at 31 to 359; the sequence is RVRVAVRLRP…LNFAAKSKQI (329 aa). 116–123 is an ATP binding site; the sequence is GPTGAGKT. The disordered stretch occupies residues 366–413; it reads QETTQTVVQPAMKRPREETGHIAGSQKRKKSKNDSTESSPNSSMDTAG. Polar residues predominate over residues 401–410; the sequence is TESSPNSSMD. A coiled-coil region spans residues 452–498; that stretch reads KRERMALLKKWEESQMEIERLKEKQKELEQKAMEAEARLEKSNNSDL. An Important for regulated proteolytic degradation motif is present at residues 561–564; that stretch reads GLEN.

This sequence belongs to the TRAFAC class myosin-kinesin ATPase superfamily. Kinesin family. Post-translationally, ubiquitinated, leading to its subsequent proteasomal degradation.

The protein localises to the nucleus. It localises to the cytoplasm. The protein resides in the cytoskeleton. Functionally, kinesin family member that is involved in spindle formation and the movements of chromosomes during mitosis and meiosis. Binds to microtubules and to DNA. This Xenopus laevis (African clawed frog) protein is Kinesin-like protein KIF22-A (kif22-a).